We begin with the raw amino-acid sequence, 362 residues long: Probable dual-specificity RNA methyltransferase RlmN (362 aa).

Glu105 functions as the Proton acceptor in the catalytic mechanism. The 234-residue stretch at 111-344 (HEYGNSICVT…VTIRREQGHD (234 aa)) folds into the Radical SAM core domain. Cys118 and Cys349 are oxidised to a cystine. [4Fe-4S] cluster contacts are provided by Cys125, Cys129, and Cys132. S-adenosyl-L-methionine-binding positions include 175–176 (GE), Ser207, 230–232 (SLH), and Asn306. Cys349 (S-methylcysteine intermediate) is an active-site residue.

Belongs to the radical SAM superfamily. RlmN family. It depends on [4Fe-4S] cluster as a cofactor.

It localises to the cytoplasm. The catalysed reaction is adenosine(2503) in 23S rRNA + 2 reduced [2Fe-2S]-[ferredoxin] + 2 S-adenosyl-L-methionine = 2-methyladenosine(2503) in 23S rRNA + 5'-deoxyadenosine + L-methionine + 2 oxidized [2Fe-2S]-[ferredoxin] + S-adenosyl-L-homocysteine. The enzyme catalyses adenosine(37) in tRNA + 2 reduced [2Fe-2S]-[ferredoxin] + 2 S-adenosyl-L-methionine = 2-methyladenosine(37) in tRNA + 5'-deoxyadenosine + L-methionine + 2 oxidized [2Fe-2S]-[ferredoxin] + S-adenosyl-L-homocysteine. Specifically methylates position 2 of adenine 2503 in 23S rRNA and position 2 of adenine 37 in tRNAs. The polypeptide is Probable dual-specificity RNA methyltransferase RlmN (Bacillus thuringiensis subsp. konkukian (strain 97-27)).